Here is a 282-residue protein sequence, read N- to C-terminus: Phosphatidylglycerol--prolipoprotein diacylglyceryl transferase (282 aa).

3 helical membrane passes run 18–38 (LSIKWYGIIIAVGILIGYFIA), 55–75 (VIFYSAIFGFIAARIYFVIFQ), and 89–109 (IWHGGIAIHGGLLGGFITGII). Arg137 contacts a 1,2-diacyl-sn-glycero-3-phospho-(1'-sn-glycerol). Transmembrane regions (helical) follow at residues 203–223 (VGETFTLYLIWYSIGRFFVEG) and 235–255 (IRVAQLVSVILIIIGLVILIY).

It belongs to the Lgt family.

It localises to the cell membrane. The enzyme catalyses L-cysteinyl-[prolipoprotein] + a 1,2-diacyl-sn-glycero-3-phospho-(1'-sn-glycerol) = an S-1,2-diacyl-sn-glyceryl-L-cysteinyl-[prolipoprotein] + sn-glycerol 1-phosphate + H(+). It participates in protein modification; lipoprotein biosynthesis (diacylglyceryl transfer). In terms of biological role, catalyzes the transfer of the diacylglyceryl group from phosphatidylglycerol to the sulfhydryl group of the N-terminal cysteine of a prolipoprotein, the first step in the formation of mature lipoproteins. This chain is Phosphatidylglycerol--prolipoprotein diacylglyceryl transferase, found in Staphylococcus haemolyticus (strain JCSC1435).